A 396-amino-acid chain; its full sequence is MLDAQTIATVKATIPLLVETGPKLTAHFYDRMFTHNPELKEIFNMSNQRNGDQREALFNAIAAYASNIENLPALLPAVEKIAQKHTSFQIKPEQYNIVGEHLLATLDEMFSPGQEVLDAWGKAYGVLANVFINREAEIYNENASKAGGWEGTRDFRIVAKTPRSALITSFELEPVDGGAVAEYRPGQYLGVWLKPEGFPHQEIRQYSLTRKPDGKGYRIAVKREEGGQVSNWLHNHANVGDVVKLVAPAGDFFMAVADDTPVTLISAGVGQTPMLAMLDTLAKAGHTAQVNWFHAAENGDVHAFADEVKELGLSLPRFTAHTWYRQPNEADRAKGQFDSEGLMDLSKLEGAFSDPTMQFYLCGPVGFMQFAAKQLVDLGVKQENIHYECFGPHKVL.

The 136-residue stretch at 1–136 (MLDAQTIATV…LANVFINREA (136 aa)) folds into the Globin domain. His85 lines the heme b pocket. Catalysis depends on charge relay system residues Tyr95 and Glu135. A reductase region spans residues 147-396 (GGWEGTRDFR…YECFGPHKVL (250 aa)). The FAD-binding FR-type domain maps to 150 to 255 (EGTRDFRIVA…VAPAGDFFMA (106 aa)). FAD is bound by residues Tyr188 and 204–207 (RQYS). NADP(+) is bound at residue 268–273 (GVGQTP). Position 389 to 392 (389 to 392 (CFGP)) interacts with FAD.

Belongs to the globin family. Two-domain flavohemoproteins subfamily. It in the C-terminal section; belongs to the flavoprotein pyridine nucleotide cytochrome reductase family. Requires heme b as cofactor. FAD serves as cofactor.

It catalyses the reaction 2 nitric oxide + NADPH + 2 O2 = 2 nitrate + NADP(+) + H(+). The enzyme catalyses 2 nitric oxide + NADH + 2 O2 = 2 nitrate + NAD(+) + H(+). Its function is as follows. Is involved in NO detoxification in an aerobic process, termed nitric oxide dioxygenase (NOD) reaction that utilizes O(2) and NAD(P)H to convert NO to nitrate, which protects the bacterium from various noxious nitrogen compounds. Therefore, plays a central role in the inducible response to nitrosative stress. In Escherichia coli O6:H1 (strain CFT073 / ATCC 700928 / UPEC), this protein is Flavohemoprotein.